A 3788-amino-acid chain; its full sequence is Lysosomal-trafficking regulator (3788 aa).

2 disordered regions span residues 148–180 (KSTH…TVVS) and 198–217 (EGHL…VLSD). Serine 164 carries the post-translational modification Phosphoserine. A Phosphothreonine modification is found at threonine 165. At serine 166 the chain carries Phosphoserine. The WD 1 repeat unit spans residues 662–700 (GPTSGLPSPSYRFQGILPSSGSEDLLWKWDALEAYQSFV). Disordered stretches follow at residues 1169–1196 (LGPG…FSEE), 1213–1240 (GYEA…EAEG), and 1482–1519 (ESAA…TESI). Over residues 1213-1232 (GYEADSESNPEDVDTQDDGV) the composition is skewed to acidic residues. Phosphoserine occurs at positions 1503 and 1504. The stretch at 1576-1620 (SQENIFFPSKWQHLVLTYIQHPQGKKNVHGEISIWVSGQRKTDVI) is one WD 2 repeat. Phosphoserine occurs at positions 2099, 2118, 2203, 2207, and 2254. The disordered stretch occupies residues 2177–2221 (ANGVSRGSPRFPRARVDHKDVGTEPRSDDDSPGDESYPRRPDNLK). The span at 2190–2205 (ARVDHKDVGTEPRSDD) shows a compositional bias: basic and acidic residues. 2 disordered regions span residues 2556 to 2581 (HDSE…SIAG) and 2659 to 2681 (NTSQ…HHEQ). Over residues 2566–2578 (SAHRHSVPPKRRS) the composition is skewed to basic residues. A compositionally biased stretch (polar residues) spans 2659–2671 (NTSQSKTSVSQTE). The BEACH-type PH domain occupies 2996–3102 (AASESIRVNR…VRDDVYQSIL (107 aa)). One can recognise a BEACH domain in the interval 3126–3409 (QITNFEYLTH…QLFHTAHASR (284 aa)). WD repeat units lie at residues 3550 to 3589 (SQQH…STPS), 3601 to 3640 (GHTE…YVQS), 3643 to 3686 (GHKS…VGHV), 3687 to 3731 (HCRE…PVRE), and 3736 to 3775 (KSNK…RVKL).

In terms of assembly, interacts with CPAP, LIP8 and ZNF521. In terms of tissue distribution, expressed in the heart, lung, liver, spleen, brain and in different immune cell types (purified B and T lymphocytes, bone marrow-derived macrophages and dendritic cells).

The protein localises to the cytoplasm. Functionally, adapter protein that regulates and/or fission of intracellular vesicles such as lysosomes. Might regulate trafficking of effectors involved in exocytosis. In cytotoxic T-cells and natural killer (NK) cells, has role in the regulation of size, number and exocytosis of lytic granules. In macrophages and dendritic cells, regulates phagosome maturation by controlling the conversion of early phagosomal compartments into late phagosomes. In macrophages and dendritic cells, specifically involved in TLR3- and TLR4-induced production of pro-inflammatory cytokines by regulating the endosomal TLR3- TICAM1/TRIF and TLR4- TICAM1/TRIF signaling pathways. The protein is Lysosomal-trafficking regulator (Lyst) of Mus musculus (Mouse).